Here is a 448-residue protein sequence, read N- to C-terminus: Divalent metal cation transporter MntH (448 aa).

The next 11 membrane-spanning stretches (helical) occupy residues 41–61, 69–89, 117–137, 147–167, 176–196, 215–235, 270–290, 307–327, 363–383, 384–404, and 424–444; these read LFAF…PGNW, SEFG…AVLL, GFVL…AEVI, FGIP…LVLF, IEVI…AEMV, IVTN…TVMP, FSLT…AAAF, LLNP…ALLA, VLAI…GINE, LLIF…IPLV, and IISW…LFYT.

Belongs to the NRAMP family.

It localises to the cell membrane. H(+)-stimulated, divalent metal cation uptake system. The protein is Divalent metal cation transporter MntH of Listeria welshimeri serovar 6b (strain ATCC 35897 / DSM 20650 / CCUG 15529 / CIP 8149 / NCTC 11857 / SLCC 5334 / V8).